The primary structure comprises 96 residues: HIG1 domain family member 1C (96 aa).

Over 1–26 (MSSDEWSAAEDEGQLSRLLRKSRDSP) the chain is Cytoplasmic. The HIG1 domain maps to 1-91 (MSSDEWSAAE…YKDYIRPRFF (91 aa)). A helical membrane pass occupies residues 27-44 (FVPVGMAGFVAVLSYGLY). The Extracellular portion of the chain corresponds to 45–58 (KLNSRREQKMSLHL). A helical transmembrane segment spans residues 59–81 (IHVRVAAQGCVVGAVTLGVLYSM). The Cytoplasmic portion of the chain corresponds to 82-96 (YKDYIRPRFFNVPKK).

The protein resides in the membrane. This is HIG1 domain family member 1C (Higd1c) from Mus musculus (Mouse).